The sequence spans 376 residues: D-alanine--D-alanine ligase (376 aa).

Positions lysine 150–glutamate 358 constitute an ATP-grasp domain. ATP is bound at residue glutamate 183–glutamate 238. The Mg(2+) site is built by aspartate 311, glutamate 325, and asparagine 327.

This sequence belongs to the D-alanine--D-alanine ligase family. Mg(2+) serves as cofactor. It depends on Mn(2+) as a cofactor.

Its subcellular location is the cytoplasm. It carries out the reaction 2 D-alanine + ATP = D-alanyl-D-alanine + ADP + phosphate + H(+). Its pathway is cell wall biogenesis; peptidoglycan biosynthesis. Cell wall formation. This is D-alanine--D-alanine ligase from Ruminiclostridium cellulolyticum (strain ATCC 35319 / DSM 5812 / JCM 6584 / H10) (Clostridium cellulolyticum).